A 346-amino-acid chain; its full sequence is Phosphoribosylformylglycinamidine cyclo-ligase (346 aa).

Belongs to the AIR synthase family.

The protein resides in the cytoplasm. It catalyses the reaction 2-formamido-N(1)-(5-O-phospho-beta-D-ribosyl)acetamidine + ATP = 5-amino-1-(5-phospho-beta-D-ribosyl)imidazole + ADP + phosphate + H(+). It participates in purine metabolism; IMP biosynthesis via de novo pathway; 5-amino-1-(5-phospho-D-ribosyl)imidazole from N(2)-formyl-N(1)-(5-phospho-D-ribosyl)glycinamide: step 2/2. This Polaromonas sp. (strain JS666 / ATCC BAA-500) protein is Phosphoribosylformylglycinamidine cyclo-ligase.